Consider the following 548-residue polypeptide: WAP, Kazal, immunoglobulin, Kunitz and NTR domain-containing protein 1 (548 aa).

Positions 1–19 are cleaved as a signal peptide; it reads MPALRPLLPLLLLLRLTSG. The region spanning 26-79 is the WAP domain; the sequence is LGSHPGVCPNQLSPNLWVDAQSTCERECSRDQDCAAAEKCCINVCGLHSCVAAR. Intrachain disulfides connect Cys-33–Cys-66, Cys-49–Cys-70, Cys-53–Cys-65, Cys-59–Cys-75, Cys-116–Cys-146, Cys-120–Cys-139, and Cys-128–Cys-157. The 52-residue stretch at 108–159 folds into the Kazal-like domain; sequence WDGQPVCRCRDRCEKEPSFTCASDGLTYYNRCYMDAEACLRGLHLHIVPCKH. The tract at residues 164 to 184 is disordered; it reads PPSSPGPPETTARPTPGAAPV. Positions 186–279 constitute an Ig-like C2-type domain; the sequence is PALYSSPSPQ…GLLRADFPLS (94 aa). 10 cysteine pairs are disulfide-bonded: Cys-207–Cys-263, Cys-299–Cys-351, Cys-306–Cys-334, Cys-326–Cys-347, Cys-359–Cys-409, Cys-368–Cys-392, Cys-384–Cys-405, Cys-417–Cys-489, Cys-420–Cys-491, and Cys-431–Cys-540. BPTI/Kunitz inhibitor domains are found at residues 299–351 and 359–409; these read CLPD…QQAC and CVLP…EDAC. The region spanning 409–540 is the NTR domain; that stretch reads CPVPRTPPCR…ILELLEKQAC (132 aa). An N-linked (GlcNAc...) asparagine glycan is attached at Asn-493.

It belongs to the WFIKKN family. In terms of tissue distribution, expressed in pancreas, kidney, liver, placenta, and lung.

It is found in the secreted. Protease-inhibitor that contains multiple distinct protease inhibitor domains. Probably has serine protease- and metalloprotease-inhibitor activity. The protein is WAP, Kazal, immunoglobulin, Kunitz and NTR domain-containing protein 1 (WFIKKN1) of Homo sapiens (Human).